The primary structure comprises 177 residues: Large ribosomal subunit protein uL6 (177 aa).

The segment covering 152–171 (RPPEPYKGKGVRYDDEEVRR) has biased composition (basic and acidic residues). The segment at 152–177 (RPPEPYKGKGVRYDDEEVRRKEAKKK) is disordered.

This sequence belongs to the universal ribosomal protein uL6 family. As to quaternary structure, part of the 50S ribosomal subunit.

Functionally, this protein binds to the 23S rRNA, and is important in its secondary structure. It is located near the subunit interface in the base of the L7/L12 stalk, and near the tRNA binding site of the peptidyltransferase center. The sequence is that of Large ribosomal subunit protein uL6 from Shewanella sp. (strain MR-4).